A 133-amino-acid chain; its full sequence is UPF0768 protein C977.18 (133 aa).

It belongs to the UPF0768 family.

The polypeptide is UPF0768 protein C977.18 (Schizosaccharomyces pombe (strain 972 / ATCC 24843) (Fission yeast)).